A 696-amino-acid chain; its full sequence is Catalase (696 aa).

Catalysis depends on residues H64 and N137. Positions 187–211 (SLAQGSQISSERGSPKAYSNTEPNK) are disordered. A compositionally biased stretch (polar residues) spans 189–208 (AQGSQISSERGSPKAYSNTE). Y353 is a heme binding site.

Belongs to the catalase family. Heme is required as a cofactor.

It carries out the reaction 2 H2O2 = O2 + 2 H2O. Functionally, occurs in almost all aerobically respiring organisms and serves to protect cells from the toxic effects of hydrogen peroxide. This Penicillium janthinellum (Penicillium vitale) protein is Catalase.